Consider the following 164-residue polypeptide: Translocator protein homolog (164 aa).

The next 5 helical transmembrane spans lie at 16–34 (WSAS…NSYK), 52–72 (SAFG…SHLA), 89–106 (ILYI…PLFY), 112–132 (KLAL…AKTW), and 141–163 (KWLI…YCLL).

It belongs to the TspO/BZRP family.

It is found in the mitochondrion membrane. Functionally, may play a role in the transport of porphyrins and heme. This chain is Translocator protein homolog, found in Schizosaccharomyces pombe (strain 972 / ATCC 24843) (Fission yeast).